A 125-amino-acid polypeptide reads, in one-letter code: MPNIRYTKDHEYIRPDPDGAVVGITDFAQSQLGDVVFVELPVIGAVLARGAEAAVVESVKAASGVNAPASGEVIEVNSALEEKPGLVNEDPNGSGWFFKLTLADPSELDALMDEEAYEAFIKTIA.

Positions 19–101 (GAVVGITDFA…NGSGWFFKLT (83 aa)) constitute a Lipoyl-binding domain. An N6-lipoyllysine modification is found at Lys-60.

It belongs to the GcvH family. In terms of assembly, the glycine cleavage system is composed of four proteins: P, T, L and H. (R)-lipoate is required as a cofactor.

Its function is as follows. The glycine cleavage system catalyzes the degradation of glycine. The H protein shuttles the methylamine group of glycine from the P protein to the T protein. This is Glycine cleavage system H protein from Methylocella silvestris (strain DSM 15510 / CIP 108128 / LMG 27833 / NCIMB 13906 / BL2).